The primary structure comprises 220 residues: Phosphatidylserine decarboxylase proenzyme (220 aa).

Ser-189 serves as the catalytic Schiff-base intermediate with substrate; via pyruvic acid. Ser-189 is subject to Pyruvic acid (Ser); by autocatalysis.

The protein belongs to the phosphatidylserine decarboxylase family. PSD-A subfamily. Heterodimer of a large membrane-associated beta subunit and a small pyruvoyl-containing alpha subunit. Pyruvate is required as a cofactor. Is synthesized initially as an inactive proenzyme. Formation of the active enzyme involves a self-maturation process in which the active site pyruvoyl group is generated from an internal serine residue via an autocatalytic post-translational modification. Two non-identical subunits are generated from the proenzyme in this reaction, and the pyruvate is formed at the N-terminus of the alpha chain, which is derived from the carboxyl end of the proenzyme. The post-translation cleavage follows an unusual pathway, termed non-hydrolytic serinolysis, in which the side chain hydroxyl group of the serine supplies its oxygen atom to form the C-terminus of the beta chain, while the remainder of the serine residue undergoes an oxidative deamination to produce ammonia and the pyruvoyl prosthetic group on the alpha chain.

Its subcellular location is the cell membrane. It carries out the reaction a 1,2-diacyl-sn-glycero-3-phospho-L-serine + H(+) = a 1,2-diacyl-sn-glycero-3-phosphoethanolamine + CO2. The protein operates within phospholipid metabolism; phosphatidylethanolamine biosynthesis; phosphatidylethanolamine from CDP-diacylglycerol: step 2/2. In terms of biological role, catalyzes the formation of phosphatidylethanolamine (PtdEtn) from phosphatidylserine (PtdSer). This is Phosphatidylserine decarboxylase proenzyme from Pelobacter propionicus (strain DSM 2379 / NBRC 103807 / OttBd1).